The chain runs to 581 residues: Protein alan shepard (581 aa).

A compositionally biased stretch (pro residues) spans 1-10 (MHPRYSPAPP). The segment at 1–73 (MHPRYSPAPP…AVTAAPPTPR (73 aa)) is disordered. A Phosphotyrosine modification is found at Y5. Over residues 35-54 (ANNSQQLPPQMPRSQNYANG) the composition is skewed to polar residues. Low complexity predominate over residues 55-68 (SSSSAAAASAVTAA). Phosphotyrosine is present on residues Y128 and Y146. Residues 168–226 (PATTTYGQRVPTAASPSNTNSSSSSNTGSQSGTLSTSLSHTTNTNTNMGPNGTAQNQNQ) are compositionally biased toward low complexity. The tract at residues 168–234 (PATTTYGQRV…NQQGGGGEQL (67 aa)) is disordered. RRM domains are found at residues 237–310 (TNLY…MAKQ) and 316–395 (TNLY…FADG). The interval 555–581 (MTDSEQASTAASPDEAYTQYPHQAAPK) is disordered.

Has a role in the perception of gravity. The chain is Protein alan shepard from Drosophila willistoni (Fruit fly).